Consider the following 1537-residue polypeptide: Leucine-rich repeat-containing protein 7 (1537 aa).

LRR repeat units follow at residues 23–44 (IISV…VFNF), 47–68 (TLEE…LFNC), 70–91 (ALRK…IASL), 93–114 (NLKE…IKCC), 116–137 (CLTI…FTQL), 139–161 (NLTQ…GRLV), 162–183 (KLRI…MHKL), 185–206 (QLER…LDQI), 208–229 (NLRE…IGKL), 231–253 (MLVY…SGCE), 254–275 (ALED…IGLL), 277–298 (KLTT…IGNL), 300–321 (LLEE…IGYL), 323–344 (SLRT…IGSC), 346–367 (NVTV…IGQM), 369–391 (KLRV…TKLK), and 392–413 (ELAA…QTEA). Phosphoserine is present on residues Ser-439, Ser-441, and Ser-443. A compositionally biased stretch (basic and acidic residues) spans 663–676 (KKESTDESEVDKTH). Disordered stretches follow at residues 663–709 (KKES…VGSL), 730–759 (FPQP…DRLP), 786–810 (AENA…RRPL), and 824–892 (EQST…SPGV). Residues 677–709 (CLNNSVSSGTYSDYSPSQASSGSSNTRVKVGSL) are compositionally biased toward polar residues. Residues 790 to 804 (NSNPLLSSKSRSTSS) are compositionally biased toward low complexity. Position 831 is a phosphothreonine (Thr-831). Position 850 is a phosphoserine (Ser-850). The span at 859-871 (PSKLETTPTTSPL) shows a compositional bias: low complexity. Residue Thr-865 is modified to Phosphothreonine. Ser-869 is modified (phosphoserine). Basic and acidic residues predominate over residues 872–882 (PERKEHIKEST). 3 positions are modified to phosphoserine: Ser-947, Ser-949, and Ser-1118. The disordered stretch occupies residues 1136 to 1159 (ELPPTDRYGRPPYRGGLDRQSSVT). Arg-1149 carries the post-translational modification Omega-N-methylarginine. Ser-1233 is modified (phosphoserine). Disordered regions lie at residues 1234–1265 (DYNL…SCGK) and 1331–1360 (QKTP…YPLG). Residues 1243 to 1263 (KPSDNSDLKTRPTPVKGEESC) are compositionally biased toward basic and acidic residues. Positions 1332-1354 (KTPSQQSNILDNGQEDVSPSGQW) are enriched in polar residues. Phosphoserine occurs at positions 1335 and 1439. Residues 1445–1535 (EQFCVRIEKN…TVDLVIQREL (91 aa)) enclose the PDZ domain.

It belongs to the LAP (LRR and PDZ) protein family. Interacts with CNKSR2 and DLG4. Interacts with CTNND2/Catenin delta-2. Forms a complex with N-cadherin through CTNND2. Interacts with CAMK2A. As to expression, brain-specific. Isoform 3 is ubiquitously expressed.

It localises to the cytoplasm. The protein localises to the postsynaptic density. Functionally, required for normal synaptic spine architecture and function. Necessary for DISC1 and GRM5 localization to postsynaptic density complexes and for both N-methyl D-aspartate receptor-dependent and metabotropic glutamate receptor-dependent long term depression. This is Leucine-rich repeat-containing protein 7 (LRRC7) from Homo sapiens (Human).